Here is a 155-residue protein sequence, read N- to C-terminus: Protein SprT-like (155 aa).

The 139-residue stretch at 7 to 145 (QRHMEEVSLQ…GSCGGKLIQI (139 aa)) folds into the SprT-like domain. His67 contributes to the Zn(2+) binding site. The active site involves Glu68. His71 is a Zn(2+) binding site.

It belongs to the SprT family. Zn(2+) serves as cofactor.

It localises to the cytoplasm. This Listeria monocytogenes serotype 4a (strain HCC23) protein is Protein SprT-like.